Here is an 89-residue protein sequence, read N- to C-terminus: Arminin 375 (89 aa).

Positions 1 to 18 (MKAVFAILFLAFIALTYA) are cleaved as a signal peptide. Residues 19–57 (KSYDEVKEEIKNEVEREIFEDLEEESDELDNYVEESNDA) constitute a propeptide that is removed on maturation. Alanine 86 carries the alanine amide modification.

The protein belongs to the arminin family. In terms of tissue distribution, expressed in entodermal epithelium along the body column.

The protein resides in the secreted. Its subcellular location is the target cell membrane. Antimicrobial peptide with a broad-spectrum antimicrobial activity. Keeps its antibacterial activity under a wide range of salt concentrations that mimic physiological conditions of human blood, which is surprising, since Hydra is an obligate freshwater animal with nearly no salt tolerance. Does not affect red blood cells. The sequence is that of Arminin 375 from Hydra oligactis (Brown hydra).